A 241-amino-acid polypeptide reads, in one-letter code: ATP synthase subunit a (241 aa).

7 consecutive transmembrane segments (helical) span residues 27-47 (NCSLVMVLASVSSILLLCWAL), 52-72 (VVPGPSQTAVELIYGFVANTL), 87-107 (VMTTFLFVLACNLVGILPFGF), 112-132 (HLSVTLALSLVVCTAITVIGF), 142-162 (IFLPEGTPLWLAPMMVFIKLF), 175-195 (LAANMIAGHTIIAVIADFVLK), and 198-218 (LVLAPLPFAFIMGLIAFEIFV).

This sequence belongs to the ATPase A chain family. F-type ATPases have 2 components, CF(1) - the catalytic core - and CF(0) - the membrane proton channel. CF(1) has five subunits: alpha(3), beta(3), gamma(1), delta(1), epsilon(1). CF(0) has three main subunits: a(1), b(2) and c(9-12). The alpha and beta chains form an alternating ring which encloses part of the gamma chain. CF(1) is attached to CF(0) by a central stalk formed by the gamma and epsilon chains, while a peripheral stalk is formed by the delta and b chains.

The protein resides in the cell inner membrane. Key component of the proton channel; it plays a direct role in the translocation of protons across the membrane. The polypeptide is ATP synthase subunit a (Anaplasma marginale (strain St. Maries)).